Reading from the N-terminus, the 512-residue chain is Sucrose-6-phosphate hydrolase (512 aa).

Substrate contacts are provided by residues 40–43 (WMND), Q59, W67, 102–103 (FS), 165–166 (RD), E229, and W311. The active site involves D43.

The protein belongs to the glycosyl hydrolase 32 family.

It localises to the cytoplasm. It catalyses the reaction Hydrolysis of terminal non-reducing beta-D-fructofuranoside residues in beta-D-fructofuranosides.. It participates in glycan biosynthesis; sucrose metabolism. The chain is Sucrose-6-phosphate hydrolase (sacA) from Zymomonas mobilis subsp. mobilis (strain ATCC 31821 / ZM4 / CP4).